A 206-amino-acid chain; its full sequence is Large ribosomal subunit protein uL4 (206 aa).

Residues 47 to 71 (TRAQKGRSEVAGSTRKQWRQKGTGR) form a disordered region.

It belongs to the universal ribosomal protein uL4 family. Part of the 50S ribosomal subunit.

Its function is as follows. One of the primary rRNA binding proteins, this protein initially binds near the 5'-end of the 23S rRNA. It is important during the early stages of 50S assembly. It makes multiple contacts with different domains of the 23S rRNA in the assembled 50S subunit and ribosome. In terms of biological role, forms part of the polypeptide exit tunnel. This is Large ribosomal subunit protein uL4 from Nitrosomonas eutropha (strain DSM 101675 / C91 / Nm57).